Reading from the N-terminus, the 235-residue chain is Probable membrane-associated kinase regulator 6 (235 aa).

The disordered stretch occupies residues 108–140; the sequence is SAATEEESEPLDTTTSEKIDTRGLNSKPSPTSS. Residues 130–140 are compositionally biased toward polar residues; that stretch reads GLNSKPSPTSS.

The protein resides in the cell membrane. In terms of biological role, may be involved in abscisic acid signaling by acting as a kinase regulator. The polypeptide is Probable membrane-associated kinase regulator 6 (MAKR6) (Arabidopsis thaliana (Mouse-ear cress)).